We begin with the raw amino-acid sequence, 1917 residues long: MSHLKLDTLHVQRSPRGSRRSSRSSGRSSACSSGSISPVPIIPIISISHDGDESESESEIETEPARLFQRRMSIKCTNNLAAIIKEGFLLKHTWSFQRWRRRYFPLKRNMLFYAKDEKCDVFDDIDLSDLCYFECGIKNVNHSFQIITPTRSLVLCAESRREMEDWLGSLKTATAPQRPRGDSFLIEQHDILSNHHHWYATSHARPTYCNVCRDALSGVTSHGLSCEVCKCKVHKRCAAKSIANCKWTTLASVGKDIIEQADGSIIMPHQWMEGNLPVSSMCAVCKKTCGSVLRLQDWRCLWCRATVHVACRPQMAVACPIGPAKLSVVPPTSVHSISTDDAWDVASPKGNFSPLLVFVNSKSGDNQGVKFLRRFKQLLNPAQVFDLISTGPSLGLRLFRHFEMFRILVCSGDGSVGWVLSEIDRFNMHKQCQVAVMPLGTGNDLARVLGWGSSCDDDTHLPQILERYESASTKMLDRWSIMVFEKAIPVPKTPKMSISTEQEAMLTGMVTSANHHLRFIVETSDTQTLISSTRNLCDTVDDLVCRISEHHKDDEQLAVKCEILRQKLNMLLDALQEEEMGAHSGDDLIATIRSLIARSIPVTPGSSAYLLNPNISIEKTEKDQINTKERRNSRSLRSSEKEALQCRANSVKRAIYNVVEHSEPGRPKRYQRKLSITPFEALKLPTTASGESSPCTSPLPIIPPINIISPTMETSRLTCISPLPDTRRDSVDENFFNSINLPAPRQFADSRRSSGVPEVIQEIEEGANGETMYRRCRMSLTGGANIDDAGNRLSPCSDGGENTPTERKVDFLRVPIHTGEPIVDPLCDYRPHEVFERTYYMTREMDKDKEKDKENDKTVEIDKEKDNCVAKEDSIPAERLVHTCNLQVPGVVVTPNTQNVYSSASITIIDTDAQTTTEQSSSDDLGGEASDILSAISNEECSVASEIFDKQDAGQTVGDIIQNMDASNFTHIDSPETSDETEAMPGESIMDDISSVLGHDITYALQDNTLTDDTTTLCSEHAGPPKPPRKKSLSALSRTQAHPRRRNSSPPRIARLARMDSDDNPQQFGFENIVFEIDNRCDDQKMREPPRYCSLAQFVEGNDIARQSFKQLMLEQQQRDGDNDTEYPEQQQTPTNKGPNSLATTSEDELSAQTAIKIEIHDIDATVRNINSSMKPNTILTTSTSPTKKSGHGQDISVVVRPPTPLRGDSIKPTASLMPVSSGGAMAVSMNCSGMLGVRAMNASEIRRHSSHAPGLAVREFDKDKDRRHSGFNPNQLTLDPEHARFLSSSPAASRRISCGSLFKKKNKKIATKRSYGLFSVRFFVVAEPDFRLATLALIRPLIPLPNEALPNLQSLKGSKSSLFMGSTLFGFDHLASAEKDKDEKGGKDKDKTPTEETNRKLPIINPLVRLPNWPNLANGGGFISKCLLANADTLCAAVSPLMDPDETLLAGYHEKCVMNNYFGIGIDAKISLDFHNKREEHPEKCRSRARNYMWYGVLGSKQLLQKTCKNLEQRVQLECDGQRIPLPELQGIVILNIPSFMGGTNFWGSSTKKDDIFLPPSFDDRVLEVVAVFGSVQMAASRLINLQHHRIAQCQSVQINILGDEEIPIQVDGEAWLQPPGMIRILHKNRVQMLCRNRSLELSLKSWQEKQRQHSISIQRDASSTASEHANSTDEVISERECYVLLNFIEAVSSLVKWVKFLIISHPALQHDLYEVACRASEALESIHPQGKLLEGPSLRTKLVEVIDSSRQLYDDACTLLRDRGHSLILREDLETKLSAALANMEMELKKCSVQKCIDGKLRAYFNVLAPNEESDGRRKSRPFWVRLRSGSTAGQQAFKPPLTNTREAASNWSVNEVVTWLETMQLSEYVDSFLKNDIRGKELLTLGRRDLKDLGVVKVGHVKRILQAIKDLSEN.

Residues 1–10 (MSHLKLDTLH) are compositionally biased toward basic and acidic residues. Residues 1 to 37 (MSHLKLDTLHVQRSPRGSRRSSRSSGRSSACSSGSIS) form a disordered region. The span at 23–37 (RSSGRSSACSSGSIS) shows a compositional bias: low complexity. The 94-residue stretch at 82–175 (AIIKEGFLLK…WLGSLKTATA (94 aa)) folds into the PH domain. 2 Phorbol-ester/DAG-type zinc fingers span residues 195–245 (HHHW…IANC) and 268–319 (PHQW…AVAC). A DAGKc domain is found at 350 to 486 (GNFSPLLVFV…DRWSIMVFEK (137 aa)). Disordered regions lie at residues 1015–1053 (TTLC…PPRI), 1114–1149 (LEQQ…SEDE), and 1380–1399 (KDKD…EETN). Residues 1128-1145 (PEQQQTPTNKGPNSLATT) show a composition bias toward polar residues. Positions 1854–1917 (WSVNEVVTWL…LQAIKDLSEN (64 aa)) constitute an SAM domain.

It belongs to the eukaryotic diacylglycerol kinase family.

It is found in the cytoplasm. It catalyses the reaction a 1,2-diacyl-sn-glycerol + ATP = a 1,2-diacyl-sn-glycero-3-phosphate + ADP + H(+). Functionally, phosphorylates diacylglycerol (DAG) to generate phosphatidic acid (PA). This Drosophila yakuba (Fruit fly) protein is Diacylglycerol kinase eta.